We begin with the raw amino-acid sequence, 237 residues long: Histone H1E (237 aa).

The span at 1-21 shows a compositional bias: low complexity; sequence MSDPAQEVEAPVEAAPVASSP. Disordered stretches follow at residues 1-56 and 109-237; these read MSDP…PVSE and LQAK…KKAK. Residues 26-42 show a composition bias toward basic and acidic residues; the sequence is EKAPKAPKAEKPKSDKP. Residues 50-124 enclose the H15 domain; sequence THPPVSEMVV…GASGSFKLPP (75 aa). A compositionally biased stretch (low complexity) spans 182-195; it reads AKPAAKKAAAPKPK. A compositionally biased stretch (basic and acidic residues) spans 200 to 209; that stretch reads PKKEVKPKKE. Residues 210–237 show a composition bias toward basic residues; sequence AKPKKAAAKPAKKPAAKPAKKPAAKKAK.

This sequence belongs to the histone H1/H5 family.

It is found in the nucleus. The protein localises to the chromosome. Functionally, histones H1 are necessary for the condensation of nucleosome chains into higher-order structures. The sequence is that of Histone H1E from Chironomus tentans (Midge).